The primary structure comprises 226 residues: DELTA-thalatoxin-Avl1b (226 aa).

Residues 1–21 form the signal peptide; sequence MRHFVVFLYMFLALSIPTAFA. The propeptide occupies 22 to 45; sequence KKHIVTKKGNHQDITNDNEGENAE. The plays an important role in the hemolytic activity stretch occupies residues 50 to 59; sequence AVAGAVIAGG. Residues 58–77 form an N-terminal region region; it reads GGELALKILTKILDEIGKID. S101, V134, S152, P154, Y180, and Y184 together coordinate phosphocholine. The trp-rich region, which is important for the binding to lipid membrane stretch occupies residues 152–167; that stretch reads SVPFDYNLYTNWWNVK. The short motif at 191 to 193 is the Cell attachment site, crucial for protein stability element; it reads KPS.

The protein belongs to the actinoporin family. Sea anemone subfamily. In terms of assembly, octamer or nonamer in membranes. Monomer in the soluble state.

The protein resides in the secreted. It localises to the nematocyst. Its subcellular location is the target cell membrane. In terms of biological role, pore-forming protein that forms cations-selective hydrophilic pores of around 1 nm and causes cytolysis. Pore formation is a multi-step process that involves specific recognition of membrane sphingomyelin (but neither cholesterol nor phosphatidylcholine) using aromatic rich region and adjacent phosphocholine (POC) binding site, firm binding to the membrane (mainly driven by hydrophobic interactions) accompanied by the transfer of the N-terminal region to the lipid-water interface and finally pore formation after oligomerization of monomers. This Actineria villosa (Okinawan sea anemone) protein is DELTA-thalatoxin-Avl1b.